We begin with the raw amino-acid sequence, 83 residues long: Omega-agatoxin-Aa4b (83 aa).

Residues 1-20 (MKLCMTLLITAIAVVTFVVA) form the signal peptide. Positions 21–35 (TQEESAEFNEVEESR) are excised as a propeptide. 4 disulfides stabilise this stretch: cysteine 39-cysteine 55, cysteine 47-cysteine 60, cysteine 54-cysteine 71, and cysteine 62-cysteine 69. Serine 81 is subject to D-serine (Ser).

Belongs to the neurotoxin 02 (plectoxin) family. 03 (omega-agtx) subfamily. The toxin with D-Ser (named omega-aga IVC) is 80-90 fold more potent than that with L-Ser (omega-aga IVB) against Cav2.1/CACNA1A (P-type) channels in rat cerebellar Purkinje neurons and is more resistant to proteases. The epimerization is done by the venom peptide isomerase heterodimer. In terms of tissue distribution, expressed by the venom gland.

The protein resides in the secreted. In terms of biological role, antagonist of voltage-gated Cav2.1/CACNA1A (P-type) calcium channels. Paralyzes insect by blocking neuromuscular transmission. The polypeptide is Omega-agatoxin-Aa4b (Agelenopsis aperta (North American funnel-web spider)).